The following is a 453-amino-acid chain: Bifunctional protein GlmU (453 aa).

Residues 1 to 228 are pyrophosphorylase; it reads MPHWAAVIMA…VHEALGINSR (228 aa). Residues Lys-23, Gln-73, 78–79, 100–102, Gly-139, Glu-153, Asn-168, and Asn-226 contribute to the UDP-N-acetyl-alpha-D-glucosamine site; these read GT and SGD. Asp-102 contributes to the Mg(2+) binding site. Position 226 (Asn-226) interacts with Mg(2+). A linker region spans residues 229–249; that stretch reads AQLAAAEDVARQRILSYWMEE. Residues 250–453 form an N-acetyltransferase region; it reads GVTIIDPRST…IENWVRNKKK (204 aa). 2 residues coordinate UDP-N-acetyl-alpha-D-glucosamine: Arg-331 and Lys-349. The active-site Proton acceptor is the His-361. UDP-N-acetyl-alpha-D-glucosamine contacts are provided by Tyr-364 and Asn-375. Acetyl-CoA-binding positions include Ala-378, 384–385, Ser-403, Ala-421, and Arg-438; that span reads NY.

In the N-terminal section; belongs to the N-acetylglucosamine-1-phosphate uridyltransferase family. This sequence in the C-terminal section; belongs to the transferase hexapeptide repeat family. As to quaternary structure, homotrimer. It depends on Mg(2+) as a cofactor.

It is found in the cytoplasm. It catalyses the reaction alpha-D-glucosamine 1-phosphate + acetyl-CoA = N-acetyl-alpha-D-glucosamine 1-phosphate + CoA + H(+). The enzyme catalyses N-acetyl-alpha-D-glucosamine 1-phosphate + UTP + H(+) = UDP-N-acetyl-alpha-D-glucosamine + diphosphate. Its pathway is nucleotide-sugar biosynthesis; UDP-N-acetyl-alpha-D-glucosamine biosynthesis; N-acetyl-alpha-D-glucosamine 1-phosphate from alpha-D-glucosamine 6-phosphate (route II): step 2/2. It functions in the pathway nucleotide-sugar biosynthesis; UDP-N-acetyl-alpha-D-glucosamine biosynthesis; UDP-N-acetyl-alpha-D-glucosamine from N-acetyl-alpha-D-glucosamine 1-phosphate: step 1/1. The protein operates within bacterial outer membrane biogenesis; LPS lipid A biosynthesis. Catalyzes the last two sequential reactions in the de novo biosynthetic pathway for UDP-N-acetylglucosamine (UDP-GlcNAc). The C-terminal domain catalyzes the transfer of acetyl group from acetyl coenzyme A to glucosamine-1-phosphate (GlcN-1-P) to produce N-acetylglucosamine-1-phosphate (GlcNAc-1-P), which is converted into UDP-GlcNAc by the transfer of uridine 5-monophosphate (from uridine 5-triphosphate), a reaction catalyzed by the N-terminal domain. This Desulfitobacterium hafniense (strain Y51) protein is Bifunctional protein GlmU.